A 448-amino-acid chain; its full sequence is UDP-N-acetylmuramoylalanine--D-glutamate ligase (448 aa).

116-122 (GSNAKST) lines the ATP pocket.

It belongs to the MurCDEF family.

It is found in the cytoplasm. It catalyses the reaction UDP-N-acetyl-alpha-D-muramoyl-L-alanine + D-glutamate + ATP = UDP-N-acetyl-alpha-D-muramoyl-L-alanyl-D-glutamate + ADP + phosphate + H(+). It functions in the pathway cell wall biogenesis; peptidoglycan biosynthesis. Functionally, cell wall formation. Catalyzes the addition of glutamate to the nucleotide precursor UDP-N-acetylmuramoyl-L-alanine (UMA). This chain is UDP-N-acetylmuramoylalanine--D-glutamate ligase, found in Pseudomonas fluorescens (strain ATCC BAA-477 / NRRL B-23932 / Pf-5).